Consider the following 1126-residue polypeptide: MTISDKIRIYELSRDLNLENKDILDAAQKLSISVKSHSSSISSEEAKKIKNLINKKNPDKTILSINKPSIKKDNFKQNKEDKSPVLSSKQGKPLKNNSNKKPLLIKPLNKPESVKKISNQLQNPNKPNIVNSSQSRANLTNTNSKPSQNFNQDKKTFVNNTPPPIKSPAKPPIQLIAKPKNINNNVKSSESSQNIARAEDKRRLSSKPDQNTNKPKTKNFNNRKNTPELVGAPIRREDPIINPNKQNNNKQNIAFKQTASNRPGSPNRPGMPNRPGLRNKPSDQGRPGSFNRQGNPNRPGSPNRPGMPNRPGLRNKPSDQGRPGSFNRQGNPNRPGSPNGPGMPNNRPGSKFNGQNSSGIRKPVSPNELLQLQKNNNSEKDKIGIKNNSKQNIEVPKQKAKAPNNRPNATPSSKKPPHRTFSNSSKKPGKTDWDDSAKLEALRSKNTQKQRQKVHIIGENDDSLTSETSGYSGEKISILSASLARPKKGKSDESKSQKTIKQFKKKKKETTRQRQKRRAMELKAAKEAKQVRPEMIIVPEDNLTVQELADKLSLESSEIIKSLFFKGITATVTQSLDLATIETVAEEFGVPVLQDDIQEAAEKTVDMIESEDIDNLIRRPPVITVMGHVDHGKTSLLDSIRESRIASGEAGGITQHIGAYQVEFEHESQKKKLTFLDTPGHEAFTAMRARGTKVTDVAVLVVAADDGCRPQTLEAISHARAAKVPIVVAINKIDKEGASPERVKQELSEKDLIAEDWGGDTVMVPVSAIKKQNIDKLLEMILLVSDVEDLQANPDRFAKGTVIEAHLDKAKGPVATLLVQNGTLKSGDVLAAGSVLGKIRAMVDEHGNRIKEAGPSFPVEALGFSEVPTAGDEFEVYPDEKTARAIVGERATDARATKLAQQMASRRVSLSSLSTQANDGELKELNLILKADVQGSVEAILGSLEQLPKNEVQVRVLLSAPGEITETDIDLAAASGSVIVGFNTSLASGAKRAADANDVDIREYEVIYKLLEDIQLAMEGLLEPDLVEESLGQAEVRATFSVGKGAIAGCYIQTGKLQRNCSLRVIRSEKVIFEGNLDSLKRVKDDVKEVNTGFECGVGCDKFSSWVEGDVIEAFKFVTKKRTLSQ.

Residues 63-519 are disordered; that stretch reads LSINKPSIKK…TTRQRQKRRA (457 aa). The span at 70–83 shows a compositional bias: basic and acidic residues; the sequence is IKKDNFKQNKEDKS. The segment covering 93–111 has biased composition (low complexity); it reads PLKNNSNKKPLLIKPLNKP. Residues 116 to 151 are compositionally biased toward polar residues; sequence KISNQLQNPNKPNIVNSSQSRANLTNTNSKPSQNFN. Pro residues predominate over residues 161–171; sequence TPPPIKSPAKP. The segment covering 181-195 has biased composition (polar residues); sequence NINNNVKSSESSQNI. 2 stretches are compositionally biased toward low complexity: residues 211 to 224 and 240 to 252; these read NTNK…NNRK and IINP…NKQN. The span at 254-264 shows a compositional bias: polar residues; the sequence is AFKQTASNRPG. Low complexity-rich tracts occupy residues 291–315 and 327–349; these read NRQG…GLRN and NRQG…NRPG. Over residues 429-443 the composition is skewed to basic and acidic residues; the sequence is GKTDWDDSAKLEALR. Positions 501–517 are enriched in basic residues; that stretch reads KQFKKKKKETTRQRQKR. In terms of domain architecture, tr-type G spans 618-790; it reads RRPPVITVMG…ILLVSDVEDL (173 aa). Residues 627–634 form a G1 region; the sequence is GHVDHGKT. Position 627–634 (627–634) interacts with GTP; that stretch reads GHVDHGKT. The segment at 652–656 is G2; that stretch reads GITQH. The G3 stretch occupies residues 677 to 680; it reads DTPG. GTP-binding positions include 677 to 681 and 731 to 734; these read DTPGH and NKID. The G4 stretch occupies residues 731 to 734; it reads NKID. The G5 stretch occupies residues 767-769; the sequence is SAI.

This sequence belongs to the TRAFAC class translation factor GTPase superfamily. Classic translation factor GTPase family. IF-2 subfamily.

The protein localises to the cytoplasm. One of the essential components for the initiation of protein synthesis. Protects formylmethionyl-tRNA from spontaneous hydrolysis and promotes its binding to the 30S ribosomal subunits. Also involved in the hydrolysis of GTP during the formation of the 70S ribosomal complex. This Prochlorococcus marinus (strain AS9601) protein is Translation initiation factor IF-2.